Here is a 497-residue protein sequence, read N- to C-terminus: Guanosine-5'-triphosphate,3'-diphosphate pyrophosphatase (497 aa).

This sequence belongs to the GppA/Ppx family. GppA subfamily.

It catalyses the reaction guanosine 3'-diphosphate 5'-triphosphate + H2O = guanosine 3',5'-bis(diphosphate) + phosphate + H(+). The protein operates within purine metabolism; ppGpp biosynthesis; ppGpp from GTP: step 2/2. Catalyzes the conversion of pppGpp to ppGpp. Guanosine pentaphosphate (pppGpp) is a cytoplasmic signaling molecule which together with ppGpp controls the 'stringent response', an adaptive process that allows bacteria to respond to amino acid starvation, resulting in the coordinated regulation of numerous cellular activities. The polypeptide is Guanosine-5'-triphosphate,3'-diphosphate pyrophosphatase (Vibrio vulnificus (strain YJ016)).